We begin with the raw amino-acid sequence, 597 residues long: uncharacterized protein (597 aa).

The next 5 helical transmembrane spans lie at Val-37 to Val-57, Ile-67 to Ala-87, Gly-109 to Ile-129, Ser-134 to Trp-154, and Ala-162 to Val-182. The Histidine kinase domain maps to His-393–Ser-597.

The protein resides in the cell membrane. This is an uncharacterized protein from Chloroflexus aurantiacus (strain ATCC 29366 / DSM 635 / J-10-fl).